The following is a 109-amino-acid chain: CRISPR-associated endoribonuclease Cas2 (109 aa).

D8 is a Mg(2+) binding site.

The protein belongs to the CRISPR-associated endoribonuclease Cas2 protein family. As to quaternary structure, homodimer, forms a heterotetramer with a Cas1 homodimer. Requires Mg(2+) as cofactor.

Its function is as follows. CRISPR (clustered regularly interspaced short palindromic repeat), is an adaptive immune system that provides protection against mobile genetic elements (viruses, transposable elements and conjugative plasmids). CRISPR clusters contain sequences complementary to antecedent mobile elements and target invading nucleic acids. CRISPR clusters are transcribed and processed into CRISPR RNA (crRNA). Functions as a ssRNA-specific endoribonuclease. Involved in the integration of spacer DNA into the CRISPR cassette. The sequence is that of CRISPR-associated endoribonuclease Cas2 from Streptococcus mutans serotype c (strain ATCC 700610 / UA159).